A 426-amino-acid polypeptide reads, in one-letter code: UPF0229 protein Csal_0882 (426 aa).

Over residues 82 to 93 (FVEGDRLRRPGG) the composition is skewed to basic and acidic residues. Residues 82–109 (FVEGDRLRRPGGEGRGGSGEGSASNQGE) form a disordered region.

Belongs to the UPF0229 family.

The protein is UPF0229 protein Csal_0882 of Chromohalobacter salexigens (strain ATCC BAA-138 / DSM 3043 / CIP 106854 / NCIMB 13768 / 1H11).